We begin with the raw amino-acid sequence, 312 residues long: Acetyl-coenzyme A carboxylase carboxyl transferase subunit alpha (312 aa).

Residues 36 to 286 form the CoA carboxyltransferase C-terminal domain; the sequence is NLEKEISKTY…ADYVKKSLNE (251 aa).

The protein belongs to the AccA family. As to quaternary structure, acetyl-CoA carboxylase is a heterohexamer composed of biotin carboxyl carrier protein (AccB), biotin carboxylase (AccC) and two subunits each of ACCase subunit alpha (AccA) and ACCase subunit beta (AccD).

The protein localises to the cytoplasm. It catalyses the reaction N(6)-carboxybiotinyl-L-lysyl-[protein] + acetyl-CoA = N(6)-biotinyl-L-lysyl-[protein] + malonyl-CoA. It functions in the pathway lipid metabolism; malonyl-CoA biosynthesis; malonyl-CoA from acetyl-CoA: step 1/1. Functionally, component of the acetyl coenzyme A carboxylase (ACC) complex. First, biotin carboxylase catalyzes the carboxylation of biotin on its carrier protein (BCCP) and then the CO(2) group is transferred by the carboxyltransferase to acetyl-CoA to form malonyl-CoA. The polypeptide is Acetyl-coenzyme A carboxylase carboxyl transferase subunit alpha (Campylobacter jejuni subsp. doylei (strain ATCC BAA-1458 / RM4099 / 269.97)).